A 352-amino-acid polypeptide reads, in one-letter code: N-acetyl-gamma-glutamyl-phosphate reductase (352 aa).

The protein belongs to the NAGSA dehydrogenase family. Type 1 subfamily.

It localises to the cytoplasm. The enzyme catalyses N-acetyl-L-glutamate 5-semialdehyde + phosphate + NADP(+) = N-acetyl-L-glutamyl 5-phosphate + NADPH + H(+). It functions in the pathway amino-acid biosynthesis; L-arginine biosynthesis; N(2)-acetyl-L-ornithine from L-glutamate: step 3/4. Catalyzes the NADPH-dependent reduction of N-acetyl-5-glutamyl phosphate to yield N-acetyl-L-glutamate 5-semialdehyde. The protein is N-acetyl-gamma-glutamyl-phosphate reductase of Nostoc ellipsosporum.